Reading from the N-terminus, the 266-residue chain is Methylsterol monooxygenase 2-2 (266 aa).

3 helical membrane passes run 24 to 44 (IGSF…FIFL), 71 to 91 (RLLL…YPVF), and 107 to 127 (EVSA…YWGH). The region spanning 113 to 247 (LFYFIIEDFV…FVYMDWIFGT (135 aa)) is the Fatty acid hydroxylase domain. The Histidine box-1 motif lies at 127–131 (HRILH). The Histidine box-2 motif lies at 140-144 (HSVHH). Residues 162–182 (ILFLGFATIVGPALTGPHLIT) traverse the membrane as a helical segment. Positions 219–225 (FHDYHHR) match the Histidine box-3 motif.

The protein belongs to the sterol desaturase family. Requires Fe cation as cofactor. In terms of tissue distribution, expressed in shoots, roots, siliques and flowers, and, slightly, in developing seeds.

Its subcellular location is the endoplasmic reticulum membrane. The catalysed reaction is 4,4-dimethyl-5alpha-cholest-7-en-3beta-ol + 6 Fe(II)-[cytochrome b5] + 3 O2 + 5 H(+) = 4alpha-carboxy-4beta-methyl-5alpha-cholest-7-ene-3beta-ol + 6 Fe(III)-[cytochrome b5] + 4 H2O. It catalyses the reaction 24-methylidenelophenol + 6 Fe(II)-[cytochrome b5] + 3 O2 + 5 H(+) = 4alpha-carboxy-ergosta-7,24(24(1))-dien-3beta-ol + 6 Fe(III)-[cytochrome b5] + 4 H2O. Its function is as follows. Non-heme iron oxygenase involved in sterols biosynthesis by catalyzing the removal of the second methyl group at the C-4 position. 24-ethylidenelophenol and 24-ethyllophenol are the preferred substrates. Together with SMO2-1, required during embryogenesis, probably by maintaining sterols and auxin homeostasis. This Arabidopsis thaliana (Mouse-ear cress) protein is Methylsterol monooxygenase 2-2.